A 397-amino-acid polypeptide reads, in one-letter code: Subtilisin-like protease 12 (397 aa).

The N-terminal stretch at 1 to 19 (MSIFKLMVIYFTLFWVVNA) is a signal peptide. Residues 20-116 (AQLLDLDSHG…VEPNREMKAA (97 aa)) constitute a propeptide that is removed on maturation. Residues 35-115 (YIVVMKNGVS…FVEPNREMKA (81 aa)) enclose the Inhibitor I9 domain. N-linked (GlcNAc...) asparagine glycosylation is found at N123, N136, and N150. A Peptidase S8 domain is found at 125–397 (TWGLARISHM…DKLLYNGSGA (273 aa)). Catalysis depends on charge relay system residues D157 and H188. N-linked (GlcNAc...) asparagine glycosylation is found at N249, N305, and N334. S343 serves as the catalytic Charge relay system. 2 N-linked (GlcNAc...) asparagine glycosylation sites follow: N385 and N393.

It belongs to the peptidase S8 family.

It localises to the secreted. In terms of biological role, secreted subtilisin-like serine protease with keratinolytic activity that contributes to pathogenicity. In Arthroderma gypseum (strain ATCC MYA-4604 / CBS 118893) (Microsporum gypseum), this protein is Subtilisin-like protease 12 (SUB12).